Consider the following 242-residue polypeptide: tRNA pseudouridine synthase A (242 aa).

Residue aspartate 51 is the Nucleophile of the active site. Residue tyrosine 107 participates in substrate binding.

This sequence belongs to the tRNA pseudouridine synthase TruA family. As to quaternary structure, homodimer.

It carries out the reaction uridine(38/39/40) in tRNA = pseudouridine(38/39/40) in tRNA. In terms of biological role, formation of pseudouridine at positions 38, 39 and 40 in the anticodon stem and loop of transfer RNAs. This Helicobacter pylori (strain P12) protein is tRNA pseudouridine synthase A.